The sequence spans 626 residues: Lysine--tRNA ligase, cytoplasmic (626 aa).

N-acetylmethionine is present on Met-1. 2 stretches are compositionally biased toward polar residues: residues 1–11 and 18–27; these read MEGAADQTTKA and DSSTTLNAAE. A disordered region spans residues 1–84; sequence MEGAADQTTK…QKAVAADDEE (84 aa). The stretch at 37 to 69 forms a coiled coil; that stretch reads RSKNALKKEQKMKQKEEEKRRKDEEKAEKAKQA. Residues 42 to 67 show a composition bias toward basic and acidic residues; it reads LKKEQKMKQKEEEKRRKDEEKAEKAK. The span at 69–78 shows a compositional bias: low complexity; sequence APKASSQKAV. Positions 141–217 form a DNA-binding region, OB; it reads SLAGRIMSKR…RGELSIFPRS (77 aa). Substrate contacts are provided by Gly-313 and Glu-337. ATP is bound by residues 359 to 361 and 367 to 368; these read RNE and HN. Substrate contacts are provided by Glu-375 and Tyr-377. Positions 521 and 528 each coordinate Ca(2+). 528–529 lines the ATP pocket; sequence EL. Substrate contacts are provided by Asn-531 and Glu-535. Residue 584 to 587 coordinates ATP; it reads GIDR.

This sequence belongs to the class-II aminoacyl-tRNA synthetase family. It depends on Ca(2+) as a cofactor.

It is found in the cytoplasm. Its subcellular location is the cytosol. It catalyses the reaction tRNA(Lys) + L-lysine + ATP = L-lysyl-tRNA(Lys) + AMP + diphosphate. Its function is as follows. Catalyzes the specific attachment of an amino acid to its cognate tRNA in a 2 step reaction: the amino acid (AA) is first activated by ATP to form AA-AMP and then transferred to the acceptor end of the tRNA. Promotes aminoacylation of non-cognate tRNAs and translational recoding of lysine at nonsense codons. This is Lysine--tRNA ligase, cytoplasmic from Arabidopsis thaliana (Mouse-ear cress).